Consider the following 193-residue polypeptide: Ion-translocating oxidoreductase complex subunit A (193 aa).

The next 6 membrane-spanning stretches (helical) occupy residues L5 to L25, F47 to L67, L72 to V92, L102 to L122, A134 to I154, and A171 to V191.

It belongs to the NqrDE/RnfAE family. As to quaternary structure, the complex is composed of six subunits: RnfA, RnfB, RnfC, RnfD, RnfE and RnfG.

Its subcellular location is the cell inner membrane. In terms of biological role, part of a membrane-bound complex that couples electron transfer with translocation of ions across the membrane. The polypeptide is Ion-translocating oxidoreductase complex subunit A (Citrobacter koseri (strain ATCC BAA-895 / CDC 4225-83 / SGSC4696)).